A 707-amino-acid polypeptide reads, in one-letter code: Polyribonucleotide nucleotidyltransferase (707 aa).

Asp486 and Asp492 together coordinate Mg(2+). The KH domain occupies 553-612 (PRIHIIKINPEKIKDVIGKGGSVIRMLTEETGTIIEIEDDGTVKISSTVKEKAKNAIRRI). Residues 622-690 (GRIYSGKVTR…RQGRLRLSIK (69 aa)) form the S1 motif domain.

This sequence belongs to the polyribonucleotide nucleotidyltransferase family. As to quaternary structure, component of the RNA degradosome, which is a multiprotein complex involved in RNA processing and mRNA degradation. Mg(2+) serves as cofactor.

It localises to the cytoplasm. The catalysed reaction is RNA(n+1) + phosphate = RNA(n) + a ribonucleoside 5'-diphosphate. In terms of biological role, involved in mRNA degradation. Catalyzes the phosphorolysis of single-stranded polyribonucleotides processively in the 3'- to 5'-direction. This Buchnera aphidicola subsp. Acyrthosiphon pisum (strain 5A) protein is Polyribonucleotide nucleotidyltransferase.